Here is a 1059-residue protein sequence, read N- to C-terminus: Ceruloplasmin (1059 aa).

The N-terminal stretch at 1-19 (MKFLLLSALLFLHSSLAWT) is a signal peptide. 6 Plastocyanin-like domains span residues 20 to 199 (REKH…LILC), 208 to 356 (KEEN…VRDC), 369 to 554 (HVRH…MKIC), 564 to 712 (RQKD…VNQC), 724 to 894 (GERT…LIVC), and 902 to 1055 (FNPK…PNQE). Tyrosine 55, glycine 64, and tyrosine 67 together coordinate Na(+). The Cu(2+) site is built by histidine 120 and histidine 122. O2 is bound at residue histidine 120. Lysine 128 lines the Ca(2+) pocket. Asparagine 138 carries N-linked (GlcNAc...) asparagine glycosylation. Residues glutamine 143, aspartate 146, and aspartate 147 each coordinate Ca(2+). The cysteines at positions 173 and 199 are disulfide-linked. Residues histidine 179 and histidine 181 each coordinate Cu(2+). Residue histidine 179 participates in O2 binding. An N-linked (GlcNAc...) asparagine glycan is attached at asparagine 226. Serine 255 serves as a coordination point for Na(+). A disulfide bridge connects residues cysteine 275 and cysteine 356. 3 residues coordinate Cu(2+): histidine 294, cysteine 337, and histidine 342. N-linked (GlcNAc...) asparagine glycosylation occurs at asparagine 396. The Na(+) site is built by phenylalanine 407, glycine 416, and tyrosine 419. An intrachain disulfide couples cysteine 528 to cysteine 554. N-linked (GlcNAc...) asparagine glycosylation is present at asparagine 582. Serine 611 lines the Na(+) pocket. Cysteine 631 and cysteine 712 form a disulfide bridge. Histidine 650, cysteine 693, histidine 698, and methionine 703 together coordinate Cu(2+). Catalysis depends on cysteine 693, which acts as the Nucleophile; for glutathione peroxidase activity. Residue asparagine 756 is glycosylated (N-linked (GlcNAc...) asparagine). Positions 761, 770, and 773 each coordinate Na(+). Cysteine 868 and cysteine 894 are disulfide-bonded. Residue asparagine 920 is glycosylated (N-linked (GlcNAc...) asparagine). Serine 949 is a binding site for Na(+). Cu(2+) is bound by residues histidine 988, histidine 991, histidine 993, histidine 1033, cysteine 1034, histidine 1035, histidine 1039, and methionine 1044. Residues histidine 991 and histidine 993 each coordinate O2. O2 is bound at residue histidine 1035.

It belongs to the multicopper oxidase family. In terms of assembly, found in a complex with MPO and LTF; interacts directly with MPO and LTF, which allows Fe(3+) incorporation into LTF, activation of CP ferroxidase activity and protection of CP antioxidant properties by MPO. It depends on Cu(2+) as a cofactor. As to expression, synthesized in liver and secreted into the plasma. Also choroid plexus, yolk sac, placenta, and testis; not in stomach and small intestine. Fetal lung and liver.

The protein localises to the secreted. It carries out the reaction 4 Fe(2+) + O2 + 4 H(+) = 4 Fe(3+) + 2 H2O. The catalysed reaction is 4 Cu(+) + O2 + 4 H(+) = 4 Cu(2+) + 2 H2O. It catalyses the reaction a hydroperoxide + 2 glutathione = an alcohol + glutathione disulfide + H2O. The enzyme catalyses 4 nitric oxide + O2 + 2 H2O = 4 nitrite + 4 H(+). It carries out the reaction 2 glutathione + H2O2 = glutathione disulfide + 2 H2O. Multifunctional blue, copper-binding (6-7 atoms per molecule) glycoprotein. It has ferroxidase activity oxidizing Fe(2+) to Fe(3+) without releasing radical oxygen species. It is involved in iron transport across the cell membrane. Copper ions provide a large number of enzymatic activites. Oxidizes highly toxic ferrous ions to the ferric state for further incorporation onto apo-transferrins, catalyzes Cu(+) oxidation and promotes the oxidation of biogenic amines such as norepinephrin and serotonin. Provides Cu(2+) ions for the ascorbate-mediated deaminase degradation of the heparan sulfate chains of GPC1. Has glutathione peroxidase-like activity, can remove both hydrogen peroxide and lipid hydroperoxide in the presence of thiols. Also shows NO-oxidase and NO2 synthase activities that determine endocrine NO homeostasis. The polypeptide is Ceruloplasmin (Cp) (Rattus norvegicus (Rat)).